The primary structure comprises 178 residues: Fimbrial adapter PapK (178 aa).

The N-terminal stretch at 1–21 (MIKSTGALLLFAALSAGQAIA) is a signal peptide.

The protein localises to the secreted. Its subcellular location is the fimbrium. Its function is as follows. Adapter that links the pilus rod to the base of the tip fibrillum. Regulates the length of the tip fibrillum and joins it to the pilus rod. Pili are polar filaments radiating from the surface of the bacterium to a length of 0.5-1.5 micrometers and numbering 100-300 per cell, and enable bacteria to colonize the epithelium of specific host organs. The polypeptide is Fimbrial adapter PapK (papK) (Escherichia coli O6:H1 (strain CFT073 / ATCC 700928 / UPEC)).